We begin with the raw amino-acid sequence, 664 residues long: L-glutamate oxidase precursor (664 aa).

The tat-type signal signal peptide spans Met1–Ala44. FAD contacts are provided by Ala105, Glu124, Ala125, Arg133, Met161, Arg162, Asp638, Trp646, and Ile647.

This sequence belongs to the flavin monoamine oxidase family. LGOX subfamily. In terms of assembly, the mature enzyme is a heterohexamer composed of 2 alpha chains, 2 beta chains and 2 gamma chains (alpha2beta2gamma2). Requires FAD as cofactor. Post-translationally, predicted to be exported by the Tat system. The position of the signal peptide cleavage has not been experimentally proven. In terms of processing, the precursor form is proteolytically cleaved by an endopeptidase into alpha, beta and gamma chains, which form the stable mature enzyme.

It is found in the secreted. The enzyme catalyses L-glutamate + O2 + H2O = H2O2 + 2-oxoglutarate + NH4(+). With respect to regulation, activity is stimulated in the presence of Mn(2+), Ca(2+) or Mg(2+). In terms of biological role, catalyzes the oxidative deamination of L-glutamate to 2-ketoglutarate along with the production of ammonia and hydrogen peroxide. The sequence is that of L-glutamate oxidase precursor from Streptomyces viridosporus (strain ATCC 14672 / DSM 40746 / JCM 4963 / KCTC 9882 / NRRL B-12104 / FH 1290) (Streptomyces ghanaensis).